We begin with the raw amino-acid sequence, 663 residues long: UvrABC system protein B (663 aa).

Positions 1–10 are enriched in basic and acidic residues; it reads MIDKRDDKPF. Residues 1–23 are disordered; that stretch reads MIDKRDDKPFKLKSKYKPSGDQP. One can recognise a Helicase ATP-binding domain in the interval 31 to 271; the sequence is DNIEGGEKAQ…EQSIAKIQAE (241 aa). 44 to 51 contacts ATP; that stretch reads GATGTGKT. The Beta-hairpin signature appears at 97–120; sequence YYDYYQPEAYVPSSDTYIEKDSSV. Residues 435-601 form the Helicase C-terminal domain; it reads QMDDLLGEIN…TIKKDIRGLI (167 aa). The 36-residue stretch at 627–662 folds into the UVR domain; that stretch reads KEAINALQKQMQEAAELLDFELAAQMRDLILELKLM.

Belongs to the UvrB family. Forms a heterotetramer with UvrA during the search for lesions. Interacts with UvrC in an incision complex.

The protein localises to the cytoplasm. In terms of biological role, the UvrABC repair system catalyzes the recognition and processing of DNA lesions. A damage recognition complex composed of 2 UvrA and 2 UvrB subunits scans DNA for abnormalities. Upon binding of the UvrA(2)B(2) complex to a putative damaged site, the DNA wraps around one UvrB monomer. DNA wrap is dependent on ATP binding by UvrB and probably causes local melting of the DNA helix, facilitating insertion of UvrB beta-hairpin between the DNA strands. Then UvrB probes one DNA strand for the presence of a lesion. If a lesion is found the UvrA subunits dissociate and the UvrB-DNA preincision complex is formed. This complex is subsequently bound by UvrC and the second UvrB is released. If no lesion is found, the DNA wraps around the other UvrB subunit that will check the other stand for damage. This chain is UvrABC system protein B, found in Streptococcus pyogenes serotype M2 (strain MGAS10270).